The primary structure comprises 244 residues: MSEIIYGIHAVKALLERDPQRFIEVYVLKGREDRRLTPLIHALESIGMTIQLANRQWLDNQTEGAVHQGIIAKVKPGRQYQENDLPDLLAQVETPFLLVLDGVTDPHNLGACLRSADAAGVHAVIIPRDRSAQLNATAKKVACGAAESVPLIRVTNLARTLRLLQEYNIWVVGTAGEADHTLYQSKLTGPMALVMGAEGEGMRRLTREHCDELISIPMVGSVSSLNVSVATGVCLFEAVRQRSS.

G196, I216, and L225 together coordinate S-adenosyl-L-methionine.

The protein belongs to the class IV-like SAM-binding methyltransferase superfamily. RNA methyltransferase TrmH family. RlmB subfamily. Homodimer.

It is found in the cytoplasm. The catalysed reaction is guanosine(2251) in 23S rRNA + S-adenosyl-L-methionine = 2'-O-methylguanosine(2251) in 23S rRNA + S-adenosyl-L-homocysteine + H(+). Specifically methylates the ribose of guanosine 2251 in 23S rRNA. The protein is 23S rRNA (guanosine-2'-O-)-methyltransferase RlmB of Photorhabdus laumondii subsp. laumondii (strain DSM 15139 / CIP 105565 / TT01) (Photorhabdus luminescens subsp. laumondii).